Here is a 1049-residue protein sequence, read N- to C-terminus: MGSHRRYLYYSILSFLLLSCSVVLAKQDKTPFFEGTSSKNSRLTAQDKGNDTCPPCFNCMLPIFECKQFSECNSYTGRCECIEGFAGDDCSLPLCGGLSPDESGNKDRPIRAQNDTCHCDNGWGGINCDVCQEDFVCDAFMPDPSIKGTCYKNGMIVDKVFSGCNVTNEKILQILNGKIPQITFACDKPNQECNFQFWIDQLESFYCGLSDCAFEYDLEQNTSHYKCNDVQCKCVPDTVLCGAKGSIDISDFLTETIKGPGDFSCDLETRQCKFSEPSMNDLILTVFGDPYITLKCESGECVHYSEIPGYKSPSKDPTVSWQGKLVLALTAVMVLALFTFATFYISKSPLFRNGLGSSKSPIRLPDEDAVNNFLQNEDDTLATLSFENITYSVPSINSDGVEETVLNEISGIVKPGQILAIMGGSGAGKTTLLDILAMKRKTGHVSGSIKVNGISMDRKSFSKIIGFVDQDDFLLPTLTVFETVLNSALLRLPKALSFEAKKARVYKVLEELRIIDIKDRIIGNEFDRGISGGEKRRVSIACELVTSPLVLFLDEPTSGLDASNANNVIECLVRLSSDYNRTLVLSIHQPRSNIFYLFDKLVLLSKGEMVYSGNAKKVSEFLRNEGYICPDNYNIADYLIDITFEAGPQGKRRRIRNISDLEAGTDTNDIDNTIHQTTFTSSDGTTQREWAHLAAHRDEIRSLLRDEEDVEGTDGRRGATEIDLNTKLLHDKYKDSVYYAELSQEIEEVLSEGDEESNVLNGDLPTGQQSAGFLQQLSILNSRSFKNMYRNPKLLLGNYLLTILLSLFLGTLYYNVSNDISGFQNRMGLFFFILTYFGFVTFTGLSSFALERIIFIKERSNNYYSPLAYYISKIMSEVVPLRVVPPILLSLIVYPMTGLNMKDNAFFKCIGILILFNLGISLEILTIGIIFEDLNNSIILSVLVLLGSLLFSGLFINTKNITNVAFKYLKNFSVFYYAYESLLINEVKTLMLKERKYGLNIEVPGATILSTFGFVVQNLVFDIKILALFNVVFLIMGYLALKWIVVEQK.

The N-terminal stretch at 1–25 (MGSHRRYLYYSILSFLLLSCSVVLA) is a signal peptide. The Lumenal portion of the chain corresponds to 26 to 324 (KQDKTPFFEG…KDPTVSWQGK (299 aa)). N-linked (GlcNAc...) asparagine glycans are attached at residues asparagine 50, asparagine 114, asparagine 165, and asparagine 221. A helical membrane pass occupies residues 325-345 (LVLALTAVMVLALFTFATFYI). Over 346 to 463 (SKSPLFRNGL…ISMDRKSFSK (118 aa)) the chain is Cytoplasmic. Residues 384–631 (LSFENITYSV…LRNEGYICPD (248 aa)) enclose the ABC transporter domain. 423 to 430 (GGSGAGKT) is a binding site for ATP. Residues 464–481 (IIGFVDQDDFLLPTLTVF) traverse the membrane as a helical segment. Residues 482–793 (ETVLNSALLR…SFKNMYRNPK (312 aa)) are Lumenal-facing. Phosphoserine occurs at positions 659 and 702. The ABC transmembrane type-2 domain maps to 793–1044 (KLLLGNYLLT…IMGYLALKWI (252 aa)). Residues 794–814 (LLLGNYLLTILLSLFLGTLYY) traverse the membrane as a helical segment. Over 815–828 (NVSNDISGFQNRMG) the chain is Cytoplasmic. The chain crosses the membrane as a helical span at residues 829 to 849 (LFFFILTYFGFVTFTGLSSFA). The Lumenal segment spans residues 850-877 (LERIIFIKERSNNYYSPLAYYISKIMSE). Residues 878 to 898 (VVPLRVVPPILLSLIVYPMTG) traverse the membrane as a helical segment. Over 899–909 (LNMKDNAFFKC) the chain is Cytoplasmic. The chain crosses the membrane as a helical span at residues 910 to 930 (IGILILFNLGISLEILTIGII). Residues 931-937 (FEDLNNS) lie on the Lumenal side of the membrane. Asparagine 935 carries N-linked (GlcNAc...) asparagine glycosylation. The chain crosses the membrane as a helical span at residues 938–958 (IILSVLVLLGSLLFSGLFINT). Over 959 to 1000 (KNITNVAFKYLKNFSVFYYAYESLLINEVKTLMLKERKYGLN) the chain is Cytoplasmic. The chain crosses the membrane as a helical span at residues 1001–1021 (IEVPGATILSTFGFVVQNLVF). Residues 1022–1024 (DIK) are Lumenal-facing. A helical transmembrane segment spans residues 1025–1045 (ILALFNVVFLIMGYLALKWIV). The Cytoplasmic segment spans residues 1046 to 1049 (VEQK).

It belongs to the ABC transporter superfamily. ABCG family. Eye pigment precursor importer (TC 3.A.1.204) subfamily.

It localises to the endoplasmic reticulum membrane. The protein is Probable ATP-dependent permease (ADP1) of Saccharomyces cerevisiae (strain ATCC 204508 / S288c) (Baker's yeast).